The chain runs to 1023 residues: 2-oxoglutarate dehydrogenase complex component E1 (1023 aa).

The transit peptide at 1 to 40 (MFHLRTCAAKLRPLTASQTVKTFSQNRPAAARTFQQIRCY) directs the protein to the mitochondrion. N6-succinyllysine is present on Lys-74. Ser-100 is subject to Phosphoserine. Positions 143, 156, and 158 each coordinate Ca(2+). Position 312 (Arg-312) interacts with thiamine diphosphate. Lys-401 is subject to N6-acetyllysine. Residues Asp-411, Asn-444, and Ile-446 each coordinate thiamine diphosphate. Positions 411, 444, and 446 each coordinate Mg(2+). Lys-534 participates in a covalent cross-link: Glycyl lysine isopeptide (Lys-Gly) (interchain with G-Cter in ubiquitin). Lys-564 carries the N6-succinyllysine modification. Gln-676 lines the thiamine diphosphate pocket. At Lys-970 the chain carries N6-acetyllysine.

The protein belongs to the alpha-ketoglutarate dehydrogenase family. As to quaternary structure, homodimer. The 2-oxoglutarate dehydrogenase complex is composed of OGDH (2-oxoglutarate dehydrogenase; E1), DLST (dihydrolipoamide succinyltransferase; E2), DLD (dihydrolipoamide dehydrogenase; E3), and the assembly factor KGD4. It contains multiple copies of the three enzymatic components (E1, E2 and E3). In the nucleus, the 2-oxoglutarate dehydrogenase complex associates with KAT2A. Interacts with ABHD11; this interaction maintains the functional lipoylation of the 2-oxoglutarate dehydrogenase complex. Requires thiamine diphosphate as cofactor. The cofactor is Mg(2+).

It is found in the mitochondrion. Its subcellular location is the nucleus. The enzyme catalyses N(6)-[(R)-lipoyl]-L-lysyl-[protein] + 2-oxoglutarate + H(+) = N(6)-[(R)-S(8)-succinyldihydrolipoyl]-L-lysyl-[protein] + CO2. Its activity is regulated as follows. Calcium ions and ADP stimulate, whereas ATP and NADH reduce catalytic activity. In terms of biological role, 2-oxoglutarate dehydrogenase (E1o) component of the 2-oxoglutarate dehydrogenase complex (OGDHC). Participates in the first step, rate limiting for the overall conversion of 2-oxoglutarate to succinyl-CoA and CO(2) catalyzed by the whole OGDHC. Catalyzes the irreversible decarboxylation of 2-oxoglutarate (alpha-ketoglutarate) via the thiamine diphosphate (ThDP) cofactor and subsequent transfer of the decarboxylated acyl intermediate on an oxidized dihydrolipoyl group that is covalently amidated to the E2 enzyme (dihydrolipoyllysine-residue succinyltransferase or DLST). Plays a key role in the Krebs (citric acid) cycle, which is a common pathway for oxidation of fuel molecules, including carbohydrates, fatty acids, and amino acids. Can catalyze the decarboxylation of 2-oxoadipate in vitro, but at a much lower rate than 2-oxoglutarate. Mainly active in the mitochondrion. A fraction of the 2-oxoglutarate dehydrogenase complex also localizes in the nucleus and is required for lysine succinylation of histones: associates with KAT2A on chromatin and provides succinyl-CoA to histone succinyltransferase KAT2A. This chain is 2-oxoglutarate dehydrogenase complex component E1, found in Homo sapiens (Human).